Here is a 215-residue protein sequence, read N- to C-terminus: Beta-crystallin A3 (215 aa).

Residues 1–30 (MGEAAVPPELDTFPAAKMAQTNPLPVPMGP) are N-terminal arm. Beta/gamma crystallin 'Greek key' domains are found at residues 31-70 (WKIT…KVEC) and 71-117 (GAWV…RPVC). Residues 118 to 123 (SANHKE) are connecting peptide. Beta/gamma crystallin 'Greek key' domains are found at residues 124–165 (SKIT…KIPC) and 166–214 (GAWV…RRIQ).

The protein belongs to the beta/gamma-crystallin family. In terms of assembly, homo/heterodimer, or complexes of higher-order. The structure of beta-crystallin oligomers seems to be stabilized through interactions between the N-terminal arms.

Crystallins are the dominant structural components of the vertebrate eye lens. This Gallus gallus (Chicken) protein is Beta-crystallin A3 (CRYBA1).